Here is a 145-residue protein sequence, read N- to C-terminus: D-aminoacyl-tRNA deacylase (145 aa).

A Gly-cisPro motif, important for rejection of L-amino acids motif is present at residues G137–P138.

The protein belongs to the DTD family. As to quaternary structure, homodimer.

The protein localises to the cytoplasm. It carries out the reaction glycyl-tRNA(Ala) + H2O = tRNA(Ala) + glycine + H(+). The enzyme catalyses a D-aminoacyl-tRNA + H2O = a tRNA + a D-alpha-amino acid + H(+). In terms of biological role, an aminoacyl-tRNA editing enzyme that deacylates mischarged D-aminoacyl-tRNAs. Also deacylates mischarged glycyl-tRNA(Ala), protecting cells against glycine mischarging by AlaRS. Acts via tRNA-based rather than protein-based catalysis; rejects L-amino acids rather than detecting D-amino acids in the active site. By recycling D-aminoacyl-tRNA to D-amino acids and free tRNA molecules, this enzyme counteracts the toxicity associated with the formation of D-aminoacyl-tRNA entities in vivo and helps enforce protein L-homochirality. The sequence is that of D-aminoacyl-tRNA deacylase from Salmonella arizonae (strain ATCC BAA-731 / CDC346-86 / RSK2980).